The primary structure comprises 274 residues: Fatty-acid O-methyltransferase (274 aa).

The protein belongs to the methyltransferase superfamily.

The catalysed reaction is a fatty acid + S-adenosyl-L-methionine = a fatty acid methyl ester + S-adenosyl-L-homocysteine. In terms of biological role, O-methyltransferase that modifies the hydroxy group of the fatty acids. Oleate is the most effective fatty acid acceptor. The sequence is that of Fatty-acid O-methyltransferase (mtf2) from Mycolicibacterium smegmatis (strain ATCC 700084 / mc(2)155) (Mycobacterium smegmatis).